Consider the following 484-residue polypeptide: 3-isopropylmalate dehydratase large subunit (484 aa).

Positions 352, 412, and 415 each coordinate [4Fe-4S] cluster. The disordered stretch occupies residues threonine 463–alanine 484. Residues leucine 464–alanine 478 are compositionally biased toward low complexity.

It belongs to the aconitase/IPM isomerase family. LeuC type 1 subfamily. As to quaternary structure, heterodimer of LeuC and LeuD. It depends on [4Fe-4S] cluster as a cofactor.

The catalysed reaction is (2R,3S)-3-isopropylmalate = (2S)-2-isopropylmalate. It functions in the pathway amino-acid biosynthesis; L-leucine biosynthesis; L-leucine from 3-methyl-2-oxobutanoate: step 2/4. Functionally, catalyzes the isomerization between 2-isopropylmalate and 3-isopropylmalate, via the formation of 2-isopropylmaleate. This chain is 3-isopropylmalate dehydratase large subunit, found in Pseudarthrobacter chlorophenolicus (strain ATCC 700700 / DSM 12829 / CIP 107037 / JCM 12360 / KCTC 9906 / NCIMB 13794 / A6) (Arthrobacter chlorophenolicus).